A 156-amino-acid polypeptide reads, in one-letter code: MGISYSVDVDSEASAKAMLRERSISLKHSKAIAREISGETVADAKEYLQAVIDEERSVPFKQHNSGVGHRNDIDGWDAGRYPEKASKDFLKLLSNVSNNADQQGFDADEMVIEHVAPHKVGESQGRKPRAMGRATTWNATLCDVEIVVTETEEVTA.

It belongs to the universal ribosomal protein uL22 family. In terms of assembly, part of the 50S ribosomal subunit.

Its function is as follows. This protein binds specifically to 23S rRNA. It makes multiple contacts with different domains of the 23S rRNA in the assembled 50S subunit and ribosome. Functionally, the globular domain of the protein is located near the polypeptide exit tunnel on the outside of the subunit, while an extended beta-hairpin is found that lines the wall of the exit tunnel in the center of the 70S ribosome. This is Large ribosomal subunit protein uL22 from Halobacterium salinarum (strain ATCC 700922 / JCM 11081 / NRC-1) (Halobacterium halobium).